A 192-amino-acid chain; its full sequence is Thymidine kinase (192 aa).

ATP-binding positions include 9-16 and 87-90; these read STMNAGKS and DEAQ. The Proton acceptor role is filled by glutamate 88. The Zn(2+) site is built by cysteine 145, cysteine 147, cysteine 182, and histidine 185.

Belongs to the thymidine kinase family. Homotetramer.

It is found in the cytoplasm. It catalyses the reaction thymidine + ATP = dTMP + ADP + H(+). The polypeptide is Thymidine kinase (Pasteurella multocida (strain Pm70)).